The primary structure comprises 255 residues: RNA polymerase sigma-F factor (255 aa).

Residues 61-74 (DLFQIGCIGLLKSV) carry the Polymerase core binding motif. Positions 221-240 (QSEVAERLGISQVQVSRLEK) form a DNA-binding region, H-T-H motif.

It belongs to the sigma-70 factor family. As to quaternary structure, interacts transiently with the RNAP core.

Its activity is regulated as follows. Interaction with SpoIIAB inhibits sigma-F activity throughout the cell before the formation of the asymmetric septum; after septation the interaction is confined to the mother cell, and sigma-F activity is released in the prespore. Fin, a second, forespore-specific anti-sigma factor is induced in 2 successive waves by sigma-F and sigma-G, by antagonizing sigma-F it allows the switch to sigma-G factor and progression to the late sporulation development stages. Sigma factors are initiation factors that promote the attachment of RNA polymerase to specific initiation sites and are then released. This sigma factor is responsible for the expression of sporulation specific genes. Interaction with SpoIIAB inhibits sigma-F activity throughout the cell before the formation of the asymmetric septum; after septation the interaction is confined to the mother cell, and sigma F activity is released in the prespore. Responsible for expression of csfB (the anti-sigma-G factor Gin). Associates with the RNAP core only in stationary phase cells. This is RNA polymerase sigma-F factor (sigF) from Bacillus subtilis (strain 168).